The primary structure comprises 360 residues: Endolytic murein transglycosylase (360 aa).

The chain crosses the membrane as a helical span at residues 16 to 36; that stretch reads IILSSIVVLFLIIGGAFLYGK.

The protein belongs to the transglycosylase MltG family.

It is found in the cell membrane. The enzyme catalyses a peptidoglycan chain = a peptidoglycan chain with N-acetyl-1,6-anhydromuramyl-[peptide] at the reducing end + a peptidoglycan chain with N-acetylglucosamine at the non-reducing end.. Functionally, functions as a peptidoglycan terminase that cleaves nascent peptidoglycan strands endolytically to terminate their elongation. The protein is Endolytic murein transglycosylase of Bacillus subtilis (strain 168).